The chain runs to 442 residues: Adenylosuccinate synthetase (442 aa).

GTP-binding positions include 25 to 31 (GDEGKGK), 53 to 55 (GHT), and Lys62. The Proton acceptor role is filled by Asp26. Residues Asp26 and Gly53 each coordinate Mg(2+). IMP-binding positions include 26–29 (DEGK) and 51–54 (NAGH). Residue His54 is the Proton donor of the active site. Thr141, Arg155, Asn232, and Thr247 together coordinate IMP. Thr307 serves as a coordination point for GTP. 307-313 (TTTKRPR) is a binding site for substrate. An IMP-binding site is contributed by Arg311. GTP is bound by residues Arg313, 339-341 (KLD), and 425-427 (GVG).

The protein belongs to the adenylosuccinate synthetase family. Homodimer. Mg(2+) serves as cofactor.

Its subcellular location is the cytoplasm. The enzyme catalyses IMP + L-aspartate + GTP = N(6)-(1,2-dicarboxyethyl)-AMP + GDP + phosphate + 2 H(+). It functions in the pathway purine metabolism; AMP biosynthesis via de novo pathway; AMP from IMP: step 1/2. Inhibited by hadacidin. Activated by fructose 1,6-bisphosphate. In terms of biological role, plays an important role in the salvage pathway for purine nucleotide biosynthesis. Catalyzes the first committed step in the biosynthesis of AMP from IMP. This chain is Adenylosuccinate synthetase (Adss), found in Plasmodium falciparum.